The sequence spans 178 residues: Crossover junction endodeoxyribonuclease RuvC (178 aa).

Catalysis depends on residues aspartate 14, glutamate 73, and aspartate 145. 3 residues coordinate Mg(2+): aspartate 14, glutamate 73, and aspartate 145.

Belongs to the RuvC family. In terms of assembly, homodimer which binds Holliday junction (HJ) DNA. The HJ becomes 2-fold symmetrical on binding to RuvC with unstacked arms; it has a different conformation from HJ DNA in complex with RuvA. In the full resolvosome a probable DNA-RuvA(4)-RuvB(12)-RuvC(2) complex forms which resolves the HJ. The cofactor is Mg(2+).

Its subcellular location is the cytoplasm. The catalysed reaction is Endonucleolytic cleavage at a junction such as a reciprocal single-stranded crossover between two homologous DNA duplexes (Holliday junction).. In terms of biological role, the RuvA-RuvB-RuvC complex processes Holliday junction (HJ) DNA during genetic recombination and DNA repair. Endonuclease that resolves HJ intermediates. Cleaves cruciform DNA by making single-stranded nicks across the HJ at symmetrical positions within the homologous arms, yielding a 5'-phosphate and a 3'-hydroxyl group; requires a central core of homology in the junction. The consensus cleavage sequence is 5'-(A/T)TT(C/G)-3'. Cleavage occurs on the 3'-side of the TT dinucleotide at the point of strand exchange. HJ branch migration catalyzed by RuvA-RuvB allows RuvC to scan DNA until it finds its consensus sequence, where it cleaves and resolves the cruciform DNA. In Nitrosomonas eutropha (strain DSM 101675 / C91 / Nm57), this protein is Crossover junction endodeoxyribonuclease RuvC.